A 76-amino-acid polypeptide reads, in one-letter code: EMBRYO SURROUNDING FACTOR 1-like protein 8 (76 aa).

Residues Met-1–Cys-22 form the signal peptide. 4 cysteine pairs are disulfide-bonded: Cys-38–Cys-54, Cys-43–Cys-74, Cys-52–Cys-70, and Cys-55–Cys-63.

The protein belongs to the MEG family. Expressed in flowers.

The polypeptide is EMBRYO SURROUNDING FACTOR 1-like protein 8 (ESFL8) (Arabidopsis thaliana (Mouse-ear cress)).